Here is an 839-residue protein sequence, read N- to C-terminus: Putative AC9 transposase (839 aa).

The segment covering 32–43 (SSSNANGTATDP) has biased composition (polar residues). The disordered stretch occupies residues 32 to 85 (SSSNANGTATDPSQDDMAIVHEPQPQPQPQPEPQPQPQPEPEEEAPQKRAKKCT). A compositionally biased stretch (pro residues) spans 55–70 (QPQPQPQPEPQPQPQP).

This Zea mays (Maize) protein is Putative AC9 transposase.